The sequence spans 142 residues: Large ribosomal subunit protein mL42 (142 aa).

Residues 1–32 constitute a mitochondrion transit peptide; sequence MALAAVKWAISSRTMLKHLFPVENGALYCVGH.

Belongs to the mitochondrion-specific ribosomal protein mL42 family. Component of the mitochondrial ribosome large subunit (39S) which comprises a 16S rRNA and about 50 distinct proteins. Component of the mitochondrial ribosome small subunit (28S) which comprises a 12S rRNA and about 30 distinct proteins.

It is found in the mitochondrion. This chain is Large ribosomal subunit protein mL42 (MRPL42), found in Bos taurus (Bovine).